The following is a 442-amino-acid chain: D-serine dehydratase (442 aa).

The residue at position 118 (lysine 118) is an N6-(pyridoxal phosphate)lysine.

It belongs to the serine/threonine dehydratase family. DsdA subfamily. In terms of assembly, monomer. The cofactor is pyridoxal 5'-phosphate.

It carries out the reaction D-serine = pyruvate + NH4(+). This is D-serine dehydratase from Escherichia fergusonii (strain ATCC 35469 / DSM 13698 / CCUG 18766 / IAM 14443 / JCM 21226 / LMG 7866 / NBRC 102419 / NCTC 12128 / CDC 0568-73).